The following is a 206-amino-acid chain: Dephospho-CoA kinase (206 aa).

In terms of domain architecture, DPCK spans 4-204 (IVGLTGGIGS…QFYLQQAENK (201 aa)). 12-17 (GSGKTT) contributes to the ATP binding site.

This sequence belongs to the CoaE family.

It is found in the cytoplasm. It catalyses the reaction 3'-dephospho-CoA + ATP = ADP + CoA + H(+). Its pathway is cofactor biosynthesis; coenzyme A biosynthesis; CoA from (R)-pantothenate: step 5/5. Functionally, catalyzes the phosphorylation of the 3'-hydroxyl group of dephosphocoenzyme A to form coenzyme A. This chain is Dephospho-CoA kinase, found in Haemophilus influenzae (strain ATCC 51907 / DSM 11121 / KW20 / Rd).